A 213-amino-acid polypeptide reads, in one-letter code: Thiamine-phosphate synthase (213 aa).

4-amino-2-methyl-5-(diphosphooxymethyl)pyrimidine-binding positions include 40-44 and Asn75; that span reads QFREK. Residues Asp76 and Asp95 each coordinate Mg(2+). 4-amino-2-methyl-5-(diphosphooxymethyl)pyrimidine is bound at residue Ser113. A 2-[(2R,5Z)-2-carboxy-4-methylthiazol-5(2H)-ylidene]ethyl phosphate-binding site is contributed by 139 to 141; it reads TPS. Lys142 provides a ligand contact to 4-amino-2-methyl-5-(diphosphooxymethyl)pyrimidine. Residues Gly171 and 191 to 192 each bind 2-[(2R,5Z)-2-carboxy-4-methylthiazol-5(2H)-ylidene]ethyl phosphate; that span reads IS.

It belongs to the thiamine-phosphate synthase family. It depends on Mg(2+) as a cofactor.

It carries out the reaction 2-[(2R,5Z)-2-carboxy-4-methylthiazol-5(2H)-ylidene]ethyl phosphate + 4-amino-2-methyl-5-(diphosphooxymethyl)pyrimidine + 2 H(+) = thiamine phosphate + CO2 + diphosphate. It catalyses the reaction 2-(2-carboxy-4-methylthiazol-5-yl)ethyl phosphate + 4-amino-2-methyl-5-(diphosphooxymethyl)pyrimidine + 2 H(+) = thiamine phosphate + CO2 + diphosphate. The enzyme catalyses 4-methyl-5-(2-phosphooxyethyl)-thiazole + 4-amino-2-methyl-5-(diphosphooxymethyl)pyrimidine + H(+) = thiamine phosphate + diphosphate. It participates in cofactor biosynthesis; thiamine diphosphate biosynthesis; thiamine phosphate from 4-amino-2-methyl-5-diphosphomethylpyrimidine and 4-methyl-5-(2-phosphoethyl)-thiazole: step 1/1. Its function is as follows. Condenses 4-methyl-5-(beta-hydroxyethyl)thiazole monophosphate (THZ-P) and 2-methyl-4-amino-5-hydroxymethyl pyrimidine pyrophosphate (HMP-PP) to form thiamine monophosphate (TMP). This is Thiamine-phosphate synthase from Staphylococcus aureus (strain MSSA476).